The following is a 510-amino-acid chain: Histidine ammonia-lyase (510 aa).

Positions 144-146 (ASG) form a cross-link, 5-imidazolinone (Ala-Gly). Position 145 is a 2,3-didehydroalanine (Ser) (serine 145).

The protein belongs to the PAL/histidase family. Post-translationally, contains an active site 4-methylidene-imidazol-5-one (MIO), which is formed autocatalytically by cyclization and dehydration of residues Ala-Ser-Gly.

The protein localises to the cytoplasm. The enzyme catalyses L-histidine = trans-urocanate + NH4(+). The protein operates within amino-acid degradation; L-histidine degradation into L-glutamate; N-formimidoyl-L-glutamate from L-histidine: step 1/3. This chain is Histidine ammonia-lyase, found in Chromobacterium violaceum (strain ATCC 12472 / DSM 30191 / JCM 1249 / CCUG 213 / NBRC 12614 / NCIMB 9131 / NCTC 9757 / MK).